We begin with the raw amino-acid sequence, 348 residues long: N-acetyl-gamma-glutamyl-phosphate reductase (348 aa).

Residue Cys-149 is part of the active site.

This sequence belongs to the NAGSA dehydrogenase family. Type 1 subfamily.

The protein resides in the cytoplasm. It carries out the reaction N-acetyl-L-glutamate 5-semialdehyde + phosphate + NADP(+) = N-acetyl-L-glutamyl 5-phosphate + NADPH + H(+). The protein operates within amino-acid biosynthesis; L-arginine biosynthesis; N(2)-acetyl-L-ornithine from L-glutamate: step 3/4. Catalyzes the NADPH-dependent reduction of N-acetyl-5-glutamyl phosphate to yield N-acetyl-L-glutamate 5-semialdehyde. The protein is N-acetyl-gamma-glutamyl-phosphate reductase of Cellvibrio japonicus (strain Ueda107) (Pseudomonas fluorescens subsp. cellulosa).